Consider the following 237-residue polypeptide: Protein lin-31 (237 aa).

A DNA-binding region (fork-head) is located at residues 12–103 (QKPPYSYIWL…SGMFENGSCL (92 aa)). Disordered regions lie at residues 110-141 (RARG…LLPE) and 195-237 (NFES…ILSS). 2 stretches are compositionally biased toward low complexity: residues 206-216 (SEISGSGSSSS) and 227-237 (SSFSIESILSS).

The protein resides in the nucleus. Its function is as follows. Lin-31 regulates how vulval precursor cells choose their fate. It helps specify three alternative cell fates in vulval development. This chain is Protein lin-31 (lin-31), found in Caenorhabditis elegans.